The sequence spans 466 residues: Replication termination factor 1 (466 aa).

DNA-binding domain stretches follow at residues 94 to 249 and 250 to 421; these read RDYT…LRRK and YNPF…KKTL. HTH myb-type domains are found at residues 251–304 and 305–363; these read NPFK…QPGE and INRS…SRDI. 2 consecutive DNA-binding regions (H-T-H motif) follow at residues 278–300 and 336–359; these read WSLI…RDYI and WSLI…YTLI.

It is found in the nucleus. Its function is as follows. Mediates site-specific replication termination at the polar replication barrier RTS1, a barrier which ensures that replication of the mat1 locus in S.pombe occurs in the centromere-proximal direction. The chain is Replication termination factor 1 (rtf1) from Schizosaccharomyces pombe (strain 972 / ATCC 24843) (Fission yeast).